Reading from the N-terminus, the 406-residue chain is Argininosuccinate synthase (406 aa).

8–16 lines the ATP pocket; sequence AYSGGLDTS. Tyr-86 contacts L-citrulline. Gly-116 is an ATP binding site. Residues Thr-118, Asn-122, and Asp-123 each contribute to the L-aspartate site. Asn-122 contributes to the L-citrulline binding site. Positions 126, 174, 183, 259, and 271 each coordinate L-citrulline.

Belongs to the argininosuccinate synthase family. Type 1 subfamily. Homotetramer.

The protein resides in the cytoplasm. It carries out the reaction L-citrulline + L-aspartate + ATP = 2-(N(omega)-L-arginino)succinate + AMP + diphosphate + H(+). It participates in amino-acid biosynthesis; L-arginine biosynthesis; L-arginine from L-ornithine and carbamoyl phosphate: step 2/3. This is Argininosuccinate synthase from Dehalococcoides mccartyi (strain ATCC BAA-2100 / JCM 16839 / KCTC 5957 / BAV1).